The chain runs to 247 residues: ATP synthase subunit a, chloroplastic (247 aa).

Helical transmembrane passes span Gln-38 to Val-58, Val-95 to Leu-115, Ile-134 to Thr-154, Leu-199 to Leu-219, and Gly-220 to Gly-240.

Belongs to the ATPase A chain family. In terms of assembly, F-type ATPases have 2 components, CF(1) - the catalytic core - and CF(0) - the membrane proton channel. CF(1) has five subunits: alpha(3), beta(3), gamma(1), delta(1), epsilon(1). CF(0) has four main subunits: a, b, b' and c.

Its subcellular location is the plastid. It localises to the chloroplast thylakoid membrane. Key component of the proton channel; it plays a direct role in the translocation of protons across the membrane. The protein is ATP synthase subunit a, chloroplastic of Ceratophyllum demersum (Rigid hornwort).